The following is a 141-amino-acid chain: Nucleoside diphosphate kinase (141 aa).

K11, F59, R87, T93, R104, and N114 together coordinate ATP. H117 serves as the catalytic Pros-phosphohistidine intermediate.

This sequence belongs to the NDK family. Homotetramer. Mg(2+) is required as a cofactor.

The protein resides in the cytoplasm. It carries out the reaction a 2'-deoxyribonucleoside 5'-diphosphate + ATP = a 2'-deoxyribonucleoside 5'-triphosphate + ADP. The catalysed reaction is a ribonucleoside 5'-diphosphate + ATP = a ribonucleoside 5'-triphosphate + ADP. In terms of biological role, major role in the synthesis of nucleoside triphosphates other than ATP. The ATP gamma phosphate is transferred to the NDP beta phosphate via a ping-pong mechanism, using a phosphorylated active-site intermediate. This is Nucleoside diphosphate kinase from Bordetella petrii (strain ATCC BAA-461 / DSM 12804 / CCUG 43448).